A 357-amino-acid chain; its full sequence is mRNA endoribonuclease toxin LS (357 aa).

Forms homodimer in solution. Forms a complex with cognate antitoxin RnlB and with enterobacteria phage T4 antitoxin Dmd.

Its subcellular location is the cytoplasm. In terms of biological role, toxic component of a type II toxin-antitoxin (TA) system. A stable (half-life 27.6 minutes) endoribonuclease that in the absence of cognate antitoxin RnlB causes generalized RNA degradation. Degrades late enterobacteria phage T4 mRNAs, protecting the host against T4 reproduction. Activity is inhibited by cognate antitoxin RnlB and by enterobacteria phage T4 protein Dmd. Targets cyaA mRNA. This Escherichia coli (strain K12) protein is mRNA endoribonuclease toxin LS (rnlA).